Consider the following 36-residue polypeptide: IACAPRFSICNSDKECCKGLRCQSRIANMWPTFCLV.

3 disulfides stabilise this stretch: cysteine 3-cysteine 17, cysteine 10-cysteine 22, and cysteine 16-cysteine 34.

In terms of tissue distribution, expressed by the venom gland.

Its subcellular location is the secreted. Neurotoxin. Causes spastic paralysis and death in mice. Moderate inhibitor of L-type calcium channels (Cav1/CACNA1). This chain is Neurotoxin PRTx26An0C3, found in Phoneutria nigriventer (Brazilian armed spider).